The sequence spans 255 residues: NADH dehydrogenase [ubiquinone] flavoprotein 2, mitochondrial (255 aa).

A mitochondrion-targeting transit peptide spans 1 to 35; the sequence is MLARLAAKRLLEIRQVFRQPTSQVTRSLSTALNYH. The [2Fe-2S] cluster site is built by C130, C135, C171, and C175. A disordered region spans residues 214–255; it reads RKGEKPPHGTQNPKRIKCGPEGGNKTLLGEPKPPQFRDLDAC.

Belongs to the complex I 24 kDa subunit family. In terms of assembly, complex I is composed of at least 49 different subunits. This is a component of the flavoprotein-sulfur (FP) fragment of the enzyme. [2Fe-2S] cluster serves as cofactor.

The protein resides in the mitochondrion inner membrane. The catalysed reaction is a ubiquinone + NADH + 5 H(+)(in) = a ubiquinol + NAD(+) + 4 H(+)(out). Its function is as follows. Core subunit of the mitochondrial membrane respiratory chain NADH dehydrogenase (Complex I) that is believed to belong to the minimal assembly required for catalysis. Complex I functions in the transfer of electrons from NADH to the respiratory chain. The immediate electron acceptor for the enzyme is believed to be ubiquinone. In Arabidopsis thaliana (Mouse-ear cress), this protein is NADH dehydrogenase [ubiquinone] flavoprotein 2, mitochondrial.